The primary structure comprises 192 residues: Putative 3-methyladenine DNA glycosylase (192 aa).

The protein belongs to the DNA glycosylase MPG family.

This chain is Putative 3-methyladenine DNA glycosylase, found in Methanoculleus marisnigri (strain ATCC 35101 / DSM 1498 / JR1).